The chain runs to 636 residues: Fructose-1,6-bisphosphatase class 3 (636 aa).

It belongs to the FBPase class 3 family. Mn(2+) is required as a cofactor.

The catalysed reaction is beta-D-fructose 1,6-bisphosphate + H2O = beta-D-fructose 6-phosphate + phosphate. The protein operates within carbohydrate biosynthesis; gluconeogenesis. In Streptococcus sanguinis (strain SK36), this protein is Fructose-1,6-bisphosphatase class 3.